We begin with the raw amino-acid sequence, 220 residues long: tRNA (guanine-N(7)-)-methyltransferase (220 aa).

S-adenosyl-L-methionine-binding residues include glutamate 44, glutamate 69, asparagine 96, and aspartate 118. Residue aspartate 118 is part of the active site. Lysine 122 lines the substrate pocket. An interaction with RNA region spans residues 124–129 (RHEKRR). Substrate contacts are provided by residues aspartate 154 and 191–194 (TEYE).

The protein belongs to the class I-like SAM-binding methyltransferase superfamily. TrmB family.

It carries out the reaction guanosine(46) in tRNA + S-adenosyl-L-methionine = N(7)-methylguanosine(46) in tRNA + S-adenosyl-L-homocysteine. It participates in tRNA modification; N(7)-methylguanine-tRNA biosynthesis. Its function is as follows. Catalyzes the formation of N(7)-methylguanine at position 46 (m7G46) in tRNA. The protein is tRNA (guanine-N(7)-)-methyltransferase of Geobacillus sp. (strain WCH70).